Consider the following 313-residue polypeptide: Ribosomal RNA small subunit methyltransferase H (313 aa).

S-adenosyl-L-methionine contacts are provided by residues 35-37 (GGH), D55, F79, D100, and Q107.

This sequence belongs to the methyltransferase superfamily. RsmH family.

It localises to the cytoplasm. The enzyme catalyses cytidine(1402) in 16S rRNA + S-adenosyl-L-methionine = N(4)-methylcytidine(1402) in 16S rRNA + S-adenosyl-L-homocysteine + H(+). In terms of biological role, specifically methylates the N4 position of cytidine in position 1402 (C1402) of 16S rRNA. The sequence is that of Ribosomal RNA small subunit methyltransferase H from Burkholderia vietnamiensis (strain G4 / LMG 22486) (Burkholderia cepacia (strain R1808)).